We begin with the raw amino-acid sequence, 96 residues long: Protein RnfH (96 aa).

Belongs to the UPF0125 (RnfH) family.

In Escherichia fergusonii (strain ATCC 35469 / DSM 13698 / CCUG 18766 / IAM 14443 / JCM 21226 / LMG 7866 / NBRC 102419 / NCTC 12128 / CDC 0568-73), this protein is Protein RnfH.